Consider the following 140-residue polypeptide: CBS domain-containing protein YhcV (140 aa).

CBS domains follow at residues 8 to 64 (MTTQ…GRDG) and 72 to 127 (MSTE…NESA).

This chain is CBS domain-containing protein YhcV (yhcV), found in Bacillus subtilis (strain 168).